A 358-amino-acid polypeptide reads, in one-letter code: Electron transfer flavoprotein subunit alpha, mitochondrial (358 aa).

FAD is bound at residue 298–326 (LYMAFGVSGAIQHLAGMRDSKVIVAVNKD).

This sequence belongs to the ETF alpha-subunit/FixB family. As to quaternary structure, heterodimer of an alpha and a beta subunit. The cofactor is FAD.

It localises to the mitochondrion matrix. Functionally, the electron transfer flavoprotein serves as a specific electron acceptor for several dehydrogenases, including five acyl-CoA dehydrogenases, glutaryl-CoA and sarcosine dehydrogenase. It transfers the electrons to the main mitochondrial respiratory chain via ETF-ubiquinone oxidoreductase (ETF dehydrogenase). The sequence is that of Electron transfer flavoprotein subunit alpha, mitochondrial (ETFA) from Oryza sativa subsp. indica (Rice).